The chain runs to 606 residues: Transmembrane 9 superfamily member 1 (606 aa).

Residues 1-27 (MTVVGNPRSWSCRWLPILILLLGTGHG) form the signal peptide. N-linked (GlcNAc...) asparagine glycosylation occurs at Asn178. 4 helical membrane passes run 237–257 (LSII…AVIL), 310–330 (VLGV…MALL), 339–359 (GAIN…SGYV), and 373–393 (VWNI…TWSV). The N-linked (GlcNAc...) asparagine glycan is linked to Asn401. Transmembrane regions (helical) follow at residues 412–432 (ILLL…IGGI), 469–489 (VGGF…FATV), 499–519 (GILF…SIAL), and 535–555 (SVLS…FYYA). Asn559 carries an N-linked (GlcNAc...) asparagine glycan. The chain crosses the membrane as a helical span at residues 570–590 (FGYSLLTGYVFFLMLGTISFF).

Belongs to the nonaspanin (TM9SF) (TC 9.A.2) family.

The protein resides in the lysosome membrane. It is found in the cytoplasmic vesicle. The protein localises to the autophagosome membrane. Its function is as follows. Plays an essential role in autophagy. The chain is Transmembrane 9 superfamily member 1 (TM9SF1) from Pongo abelii (Sumatran orangutan).